A 437-amino-acid chain; its full sequence is UPF0597 protein Shal_0864 (437 aa).

It belongs to the UPF0597 family.

The chain is UPF0597 protein Shal_0864 from Shewanella halifaxensis (strain HAW-EB4).